Here is a 494-residue protein sequence, read N- to C-terminus: MELGGAFTIFLALCFSCLLILIAWKRVQKPGRLPPGPTPIPFLGNLLQVRTDATFQSFLKLREKYGPVFTVYMGPRPVVILCGHEAVKEALVDRADEFSGRGELASVERNFQGHGVALANGERWRILRRFSLTILRDFGMGKRSIEERIQEEAGYLLEEFRKTKGAPIDPTFFLSRTVSNVISSVVFGSRFDYEDKQFLSLLRMINESFIEMSTPWAQLYDMYSGVMQYLPGRHNRIYYLIEELKDFIAARVKVNEASLDPQNPRDFIDCFLIKMHQDKNNPHTEFNLKNLVLTTLNLFFAGTETVSSTLRYGFLLIMKHPEVQTKIYEEINQVIGPHRIPSVDDRVKMPFTDAVIHEIQRLTDIVPMGVPHNVIRDTHFRGYLLPKGTDVFPLLGSVLKDPKYFCHPDDFYPQHFLDEQGRFKKNEAFVPFSSGKRICLGEAMARMELFLYFTSILQNFSLHPLVPPVNIDITPKISGFGNIPPTYELCLIAR.

Cysteine 439 is a binding site for heme.

The protein belongs to the cytochrome P450 family. Heme is required as a cofactor. Olfactory epithelium.

Its subcellular location is the endoplasmic reticulum membrane. The protein localises to the microsome membrane. The enzyme catalyses an organic molecule + reduced [NADPH--hemoprotein reductase] + O2 = an alcohol + oxidized [NADPH--hemoprotein reductase] + H2O + H(+). In terms of biological role, cytochromes P450 are a group of heme-thiolate monooxygenases. This isozyme seems to be implicated in olfaction. This is Cytochrome P450 2G1 (CYP2G1) from Oryctolagus cuniculus (Rabbit).